A 367-amino-acid polypeptide reads, in one-letter code: Mitogen-activated protein kinase 12 (367 aa).

Positions 27-311 (YRDLQPVGSG…AGEALAHPYF (285 aa)) constitute a Protein kinase domain. Residues 33-41 (VGSGAYGAV) and Lys56 each bind ATP. Asp153 acts as the Proton acceptor in catalysis. The residue at position 183 (Thr183) is a Phosphothreonine; by MAP2K3 and MAP2K6. The TXY signature appears at 183–185 (TGY). Tyr185 carries the phosphotyrosine modification.

It belongs to the protein kinase superfamily. CMGC Ser/Thr protein kinase family. MAP kinase subfamily. As to quaternary structure, monomer. Interacts with the PDZ domain of the syntrophin SNTA1. Interacts with SH3BP5. Interacts with LIN7C, SCRIB and SYNJ2BP. Interacts with PTPN4; this interaction induces the activation of PTPN4 phosphatase activity. Mg(2+) serves as cofactor. In terms of processing, dually phosphorylated on Thr-183 and Tyr-185 by MAP2K3/MKK3 and MAP2K6/MKK6, which activates the enzyme. Post-translationally, ubiquitinated. Ubiquitination leads to degradation by the proteasome pathway. As to expression, highly expressed in skeletal muscle and heart.

Its subcellular location is the cytoplasm. It is found in the nucleus. The protein resides in the mitochondrion. It carries out the reaction L-seryl-[protein] + ATP = O-phospho-L-seryl-[protein] + ADP + H(+). The enzyme catalyses L-threonyl-[protein] + ATP = O-phospho-L-threonyl-[protein] + ADP + H(+). Activated by phosphorylation on threonine and tyrosine. MAP2K3/MKK3 and MAP2K6/MKK6 are both essential for the activation of MAPK12 induced by environmental stress, whereas MAP2K6/MKK6 is the major MAPK12 activator in response to TNF-alpha. In terms of biological role, serine/threonine kinase which acts as an essential component of the MAP kinase signal transduction pathway. MAPK12 is one of the four p38 MAPKs which play an important role in the cascades of cellular responses evoked by extracellular stimuli such as pro-inflammatory cytokines or physical stress leading to direct activation of transcription factors such as ELK1 and ATF2. Accordingly, p38 MAPKs phosphorylate a broad range of proteins and it has been estimated that they may have approximately 200 to 300 substrates each. Some of the targets are downstream kinases such as MAPKAPK2, which are activated through phosphorylation and further phosphorylate additional targets. Plays a role in myoblast differentiation and also in the down-regulation of cyclin D1 in response to hypoxia in adrenal cells suggesting MAPK12 may inhibit cell proliferation while promoting differentiation. Phosphorylates DLG1. Following osmotic shock, MAPK12 in the cell nucleus increases its association with nuclear DLG1, thereby causing dissociation of DLG1-SFPQ complexes. This function is independent of its catalytic activity and could affect mRNA processing and/or gene transcription to aid cell adaptation to osmolarity changes in the environment. Regulates UV-induced checkpoint signaling and repair of UV-induced DNA damage and G2 arrest after gamma-radiation exposure. MAPK12 is involved in the regulation of SLC2A1 expression and basal glucose uptake in L6 myotubes; and negatively regulates SLC2A4 expression and contraction-mediated glucose uptake in adult skeletal muscle. C-Jun (JUN) phosphorylation is stimulated by MAPK14 and inhibited by MAPK12, leading to a distinct AP-1 regulation. MAPK12 is required for the normal kinetochore localization of PLK1, prevents chromosomal instability and supports mitotic cell viability. MAPK12-signaling is also positively regulating the expansion of transient amplifying myogenic precursor cells during muscle growth and regeneration. In Homo sapiens (Human), this protein is Mitogen-activated protein kinase 12 (MAPK12).